Here is a 339-residue protein sequence, read N- to C-terminus: Leucine-rich repeat-containing protein 59 (339 aa).

Residues Met-1–Arg-282 lie on the Cytoplasmic side of the membrane. LRR repeat units lie at residues Ser-10–Pro-31, Lys-40–Leu-61, His-63–Leu-84, and Ser-86–Leu-107. Residues Met-181–Thr-254 adopt a coiled-coil conformation. The segment at Ser-186–Ser-275 is disordered. Residues Glu-187–Gln-256 show a composition bias toward basic and acidic residues. A helical transmembrane segment spans residues Ala-283–Leu-300. Over Thr-301–Gln-339 the chain is Lumenal.

In terms of assembly, interacts with SGO1.

The protein localises to the microsome membrane. The protein resides in the endoplasmic reticulum membrane. It is found in the nucleus envelope. In terms of biological role, required for nuclear import of FGF1. The polypeptide is Leucine-rich repeat-containing protein 59 (LRRC59) (Gallus gallus (Chicken)).